Reading from the N-terminus, the 406-residue chain is NADH-ubiquinone oxidoreductase 49 kDa subunit (406 aa).

The protein belongs to the complex I 49 kDa subunit family. Complex I is composed of 45 different subunits. Component of the iron-sulfur (IP) fragment of the enzyme.

The protein resides in the mitochondrion inner membrane. The catalysed reaction is a ubiquinone + NADH + 5 H(+)(in) = a ubiquinol + NAD(+) + 4 H(+)(out). Its function is as follows. Core subunit of the mitochondrial membrane respiratory chain NADH dehydrogenase (Complex I) that is believed to belong to the minimal assembly required for catalysis. Complex I functions in the transfer of electrons from NADH to the respiratory chain. The immediate electron acceptor for the enzyme is believed to be ubiquinone. The polypeptide is NADH-ubiquinone oxidoreductase 49 kDa subunit (nad7) (Dictyostelium citrinum (Slime mold)).